The chain runs to 324 residues: IDS-like terpene synthase 1 (324 aa).

Positions 77 and 81 each coordinate Mg(2+).

It belongs to the FPP/GGPP synthase family. Mg(2+) is required as a cofactor.

It catalyses the reaction (2E)-geranyl diphosphate = (E)-beta-ocimene + diphosphate. It carries out the reaction (2E)-geranyl diphosphate + H2O = linalool + diphosphate. The catalysed reaction is (2E,6E)-farnesyl diphosphate = (3E,6E)-alpha-farnesene + diphosphate. The enzyme catalyses (2E,6E,10E)-geranylgeranyl diphosphate = (E,E,E)-alpha-springene + diphosphate. Its function is as follows. Terpene synthase that shows monoterpene synthase activity and produces (E)-beta-ocimene as a major product and linalool as a minor product, using geranyl diphosphate (GPP) as substrate. Also shows sesquiterpene synthase activity as it is able to convert farnesyl diphosphate (FPP) into (E,E)-alpha-farnesene. Finally, TPS1 can convert geranylgeranyl diphosphate into (E,E,E)-alpha-springene. The chain is IDS-like terpene synthase 1 from Melampsora larici-populina (strain 98AG31 / pathotype 3-4-7) (Poplar leaf rust fungus).